A 382-amino-acid polypeptide reads, in one-letter code: Probable cytosolic iron-sulfur protein assembly protein 1 (382 aa).

WD repeat units lie at residues 9–48 (AHHD…KFPR), 55–107 (THTR…DNDE), 138–178 (GHEH…EEFE), 185–224 (EHQQ…DDWG), 231–278 (GHQG…SETN), 303–342 (AHTY…WEIE), and 349–382 (HGVH…NVWE).

It belongs to the WD repeat CIA1 family. In terms of assembly, interacts with NAR1.

It localises to the cytoplasm. The protein resides in the nucleus. Functionally, essential component of the cytosolic iron-sulfur (Fe/S) protein assembly machinery. Required for the maturation of extramitochondrial Fe/S proteins. The chain is Probable cytosolic iron-sulfur protein assembly protein 1 from Meyerozyma guilliermondii (strain ATCC 6260 / CBS 566 / DSM 6381 / JCM 1539 / NBRC 10279 / NRRL Y-324) (Yeast).